Reading from the N-terminus, the 736-residue chain is MTTELENLSEAEAANELMRLARQIAKHDRLYHAEDAPEITDQEYDALVRRNAELEAAFPHLVREDSPSRKVGHAVAASPLSKVTHEVRMMSLDNAFADEEVAEFVARVRRYLNIGEDEAIAFTAEDKIDGLSCSLRYENGKLVRAATRGDGQVGEDVTPNVAHIGDIPQELTPLPLAGGAGGGPLDDSGSAPTPDPSRRREGKWNGPAVFEIRGEVYMATADFHALNARLMDEARAEADEKDNAFDTAKVRQFANPRNAAAGSLRQKDASVTATRPLRFWAHGWGAVEGDVPGETQVEVVEQIAAWGVPVSPLFRRCETLEEMLAHYEAIGAQRADLPYEIDGVVYKVDRLDYQQRLGFVAKAPRWAIARKFPAEQAETTLENIDIQVGRTGKLTPVGRLAPVLVGGVTVTNVTLHNRDEIERLGVRPGDRVVVQRAGDVIPQVVRNLTPDEKRDSFEFPDTCPECGSEAVSEEGGVDVRCTGGLICPAQRTERLKHFVSRAALDIDGLGEKTIDQFFALGWLESPADIFRLKDRRDEILALEGWMDKSVDNLLASVEARREPDTARLLLGLGIRHVGAVTARDLMKYFHELPALRETAEKARAGDEEAVVALTSIDGIGSAVVEALGDFFHEEHNRAVWDDLLSEVSPPRYEVETLDSPVAGKTVVFTGKLETMSRDEAKAQAERLGAKASGSVSAKTDLLVAGPGAGSKLKKAQDLGIEVIDEAGWAEIVAAAG.

NAD(+)-binding positions include 41-45 (DQEYD), 91-92 (SL), and E125. Catalysis depends on K127, which acts as the N6-AMP-lysine intermediate. R148 is an NAD(+) binding site. A disordered region spans residues 170 to 205 (ELTPLPLAGGAGGGPLDDSGSAPTPDPSRRREGKWN). Positions 215, 347, and 371 each coordinate NAD(+). 4 residues coordinate Zn(2+): C463, C466, C481, and C487. Residues 656–736 (TLDSPVAGKT…GWAEIVAAAG (81 aa)) form the BRCT domain.

It belongs to the NAD-dependent DNA ligase family. LigA subfamily. It depends on Mg(2+) as a cofactor. Mn(2+) serves as cofactor.

It catalyses the reaction NAD(+) + (deoxyribonucleotide)n-3'-hydroxyl + 5'-phospho-(deoxyribonucleotide)m = (deoxyribonucleotide)n+m + AMP + beta-nicotinamide D-nucleotide.. DNA ligase that catalyzes the formation of phosphodiester linkages between 5'-phosphoryl and 3'-hydroxyl groups in double-stranded DNA using NAD as a coenzyme and as the energy source for the reaction. It is essential for DNA replication and repair of damaged DNA. The polypeptide is DNA ligase (Erythrobacter litoralis (strain HTCC2594)).